The chain runs to 119 residues: MTRVPRGYIARRRRTKMRSFASNFRGAHLRLNRMITQQVKRAFVSSHRDRGRQKRDFRRLWITRINAATRVYKVFDSYSKLIHNLYKKKLILNRKMLAQVAVSNPNNLYTISNKIKIIN.

This sequence belongs to the bacterial ribosomal protein bL20 family.

It is found in the plastid. The protein localises to the chloroplast. Its function is as follows. Binds directly to 23S ribosomal RNA and is necessary for the in vitro assembly process of the 50S ribosomal subunit. It is not involved in the protein synthesizing functions of that subunit. The protein is Large ribosomal subunit protein bL20c of Triticum aestivum (Wheat).